A 479-amino-acid chain; its full sequence is Glutamate--tRNA ligase 2 (479 aa).

A 'HIGH' region motif is present at residues 10–20 (PSPTGSLHIGG). The 'KMSKS' region signature appears at 243-247 (KLSKR). Lysine 246 contributes to the ATP binding site.

The protein belongs to the class-I aminoacyl-tRNA synthetase family. Glutamate--tRNA ligase type 1 subfamily. As to quaternary structure, monomer.

The protein resides in the cytoplasm. The catalysed reaction is tRNA(Glu) + L-glutamate + ATP = L-glutamyl-tRNA(Glu) + AMP + diphosphate. Catalyzes the attachment of glutamate to tRNA(Glu) in a two-step reaction: glutamate is first activated by ATP to form Glu-AMP and then transferred to the acceptor end of tRNA(Glu). The protein is Glutamate--tRNA ligase 2 of Thermoanaerobacter pseudethanolicus (strain ATCC 33223 / 39E) (Clostridium thermohydrosulfuricum).